A 123-amino-acid chain; its full sequence is Holo-[acyl-carrier-protein] synthase (123 aa).

The Mg(2+) site is built by D8 and E60.

It belongs to the P-Pant transferase superfamily. AcpS family. It depends on Mg(2+) as a cofactor.

It is found in the cytoplasm. The catalysed reaction is apo-[ACP] + CoA = holo-[ACP] + adenosine 3',5'-bisphosphate + H(+). Its function is as follows. Transfers the 4'-phosphopantetheine moiety from coenzyme A to a Ser of acyl-carrier-protein. The polypeptide is Holo-[acyl-carrier-protein] synthase (Ehrlichia ruminantium (strain Welgevonden)).